The sequence spans 354 residues: Serine/threonine-protein phosphatase 2A activator 2 (354 aa).

This sequence belongs to the PTPA-type PPIase family.

The protein localises to the cytoplasm. It carries out the reaction [protein]-peptidylproline (omega=180) = [protein]-peptidylproline (omega=0). Its function is as follows. PPIases accelerate the folding of proteins. It catalyzes the cis-trans isomerization of proline imidic peptide bonds in oligopeptides. Acts as a regulatory subunit for PP2A-like phosphatases modulating their activity or substrate specificity, probably by inducing a conformational change in the catalytic subunit, a direct target of the PPIase. Can reactivate inactive phosphatase PP2A-phosphatase methylesterase complexes (PP2Ai) in presence of ATP and Mg(2+) by dissociating the inactive form from the complex. This chain is Serine/threonine-protein phosphatase 2A activator 2 (RRD2), found in Yarrowia lipolytica (strain CLIB 122 / E 150) (Yeast).